We begin with the raw amino-acid sequence, 558 residues long: Ribonuclease J (558 aa).

Residues His81, His83, Asp85, His86, His148, and Asp170 each contribute to the Zn(2+) site. 371–375 (HVSGH) is a substrate binding site. Residue His397 participates in Zn(2+) binding.

The protein belongs to the metallo-beta-lactamase superfamily. RNA-metabolizing metallo-beta-lactamase-like family. Bacterial RNase J subfamily. In terms of assembly, homodimer, may be a subunit of the RNA degradosome. Zn(2+) serves as cofactor.

The protein resides in the cytoplasm. Its function is as follows. An RNase that has 5'-3' exonuclease and possibly endoonuclease activity. Involved in maturation of rRNA and in some organisms also mRNA maturation and/or decay. The sequence is that of Ribonuclease J from Mycobacterium tuberculosis (strain CDC 1551 / Oshkosh).